The primary structure comprises 616 residues: Dihydroxy-acid dehydratase (616 aa).

Asp81 contributes to the Mg(2+) binding site. [2Fe-2S] cluster is bound at residue Cys122. Mg(2+)-binding residues include Asp123 and Lys124. Lys124 is modified (N6-carboxylysine). Cys195 is a binding site for [2Fe-2S] cluster. Glu491 provides a ligand contact to Mg(2+). The active-site Proton acceptor is Ser517.

Belongs to the IlvD/Edd family. In terms of assembly, homodimer. Requires [2Fe-2S] cluster as cofactor. Mg(2+) serves as cofactor.

It catalyses the reaction (2R)-2,3-dihydroxy-3-methylbutanoate = 3-methyl-2-oxobutanoate + H2O. The catalysed reaction is (2R,3R)-2,3-dihydroxy-3-methylpentanoate = (S)-3-methyl-2-oxopentanoate + H2O. The protein operates within amino-acid biosynthesis; L-isoleucine biosynthesis; L-isoleucine from 2-oxobutanoate: step 3/4. Its pathway is amino-acid biosynthesis; L-valine biosynthesis; L-valine from pyruvate: step 3/4. Functionally, functions in the biosynthesis of branched-chain amino acids. Catalyzes the dehydration of (2R,3R)-2,3-dihydroxy-3-methylpentanoate (2,3-dihydroxy-3-methylvalerate) into 2-oxo-3-methylpentanoate (2-oxo-3-methylvalerate) and of (2R)-2,3-dihydroxy-3-methylbutanoate (2,3-dihydroxyisovalerate) into 2-oxo-3-methylbutanoate (2-oxoisovalerate), the penultimate precursor to L-isoleucine and L-valine, respectively. The polypeptide is Dihydroxy-acid dehydratase (Yersinia pseudotuberculosis serotype O:1b (strain IP 31758)).